A 282-amino-acid polypeptide reads, in one-letter code: Bis(5'-nucleosyl)-tetraphosphatase, symmetrical (282 aa).

The protein belongs to the Ap4A hydrolase family.

The catalysed reaction is P(1),P(4)-bis(5'-adenosyl) tetraphosphate + H2O = 2 ADP + 2 H(+). In terms of biological role, hydrolyzes diadenosine 5',5'''-P1,P4-tetraphosphate to yield ADP. In Escherichia coli O81 (strain ED1a), this protein is Bis(5'-nucleosyl)-tetraphosphatase, symmetrical.